Consider the following 598-residue polypeptide: Elongation factor 4 (598 aa).

Residues 2–184 (DHIRNFSIIA…AIVKRVPPPR (183 aa)) enclose the tr-type G domain. Residues 14 to 19 (DHGKST) and 131 to 134 (NKID) each bind GTP.

It belongs to the TRAFAC class translation factor GTPase superfamily. Classic translation factor GTPase family. LepA subfamily.

The protein localises to the cell inner membrane. It catalyses the reaction GTP + H2O = GDP + phosphate + H(+). Required for accurate and efficient protein synthesis under certain stress conditions. May act as a fidelity factor of the translation reaction, by catalyzing a one-codon backward translocation of tRNAs on improperly translocated ribosomes. Back-translocation proceeds from a post-translocation (POST) complex to a pre-translocation (PRE) complex, thus giving elongation factor G a second chance to translocate the tRNAs correctly. Binds to ribosomes in a GTP-dependent manner. The polypeptide is Elongation factor 4 (Syntrophus aciditrophicus (strain SB)).